We begin with the raw amino-acid sequence, 1826 residues long: MVGVLSMAAAAAPLPVKDYEIEPCKKRRKDDDNSSCETITKYLSPIGKTGDKVFSPPKPSNILHYFRKTSLTTEKPQSTKAYKIKPSPPLLVGNSKDCKTPLEVFSNREFKRKRKRVSLSSQLNDIKIQDECPVEISNNDSKEDGGLSDCVESSASVSLYKEHVEVLAESIEDSRNQPNTKSSKKKVNPKQCTTKSDDRILRKRKRSKVTGQSESVPLADELSLPEDGGKDSKLTKPSLAEENDSRTHATKRADLKESTITVSYEEFVKSHKAAKVEEIPDPAVPACVPSGPGEAVKSGSEGELSGSCEPSPQLHLKTVTVLAQVHPTPPKKKGKIPPIFLKQKQPELENSLSDPENEQPVQKRKSNVVIQEGQLELAVLEAWNSEASVPKCSMEERQQFMRAFRQPPPDTLKNGFKKPLEKQKDPSEKSVHEGDSSSEKIIENPNIQRVSSQGCLQSHADRGSFPKEKSKKPNKKGKKTRTTAGGNREENIQKEKTAFSLKDEQDQNSLRRSVRQKSEVLKSNALLNSENLVCEDTAHDSVQMSLCNRNKSRSSSTPTRDMVTHHRAEPGSSLEYVSTRQPIRRSLRSCSTPATNALGGTESEDAQDTIPVKASTPKSARTSEKHNLYTAELIIVSSDSESPIRMKFTRISTPKKSKKSSKKSETTEEELTSQKKKANSTSKNISKAKELIEEAKAFQIGGSKTEETVVPLRRSSRHQARSAKEKSPEIDDSVIVIDSSPTSIREPEKSQKKLQNLNDVLGKKLNKSSKNVPGKMKIAPLFLAKRTKRAAIPVFDLDESSQDSSEQTQDCDVQFKAKRDFLMSGLPDLLKRQIAKKAAALDVYNAVSTSFQRVVHVQQKDDEYWLWHLKPPSCPLLTEFKELNTKVTDLSEYVVAFGEFSTLNPNPRSNPAAVMMRTRKDFTKEVRNLLLEEIKCSNPEFSLEKYFPLLLKKRIEHQVLCEGHGKQASPQLQPDVSQKETKRKQVATGNQKSKRKRQNEYSVSPEEMKGRSKDLDERISSSCTNLDPSRDSGTEDMLWTEKYQPQNSNELIGNELAVKKLHSWLKDWKRRAELEERHNLKGKRDEKEEGILDLSDSTDFKGSSDDEENRLCNTVLITGPTGVGKTAAVYACAQELGFKIFEVNASSQRSGRQILSQLKEATQSHQVDKQGVNSQKPCFFNNYNIGKSPKKLNSPGKVVTSPRKLPPSSPKTSGQKRALLPKTLANYFKVSSKSKSNDDVGALMGDDKGVKNSSLEQRQLIQTKSTNANNSHIKDVGAEESNRKKATSLILFEEVDVIFDEDAGFLNAVKTFMATTKRPVILTTSDPTFSLVFDGCFEEINFSIPSLLNVASYLQVICLVENFRTDFKDFVTLLTANACDIRKSILYLQFWIRSGGGILEERPLSHCRENSRNTLVCSEDGSDANINSKKPKRNRVALPRCDTGCAEALFGLKNIASPSQDLLSLLKHKITTKEEWQKLIQVLTEFHVQNIDLLHSNLEVILPLPVHVVPDVRGAYGFPVTTQASAPASMGHLTRKQSKDQPLRKSQKRKQKKMVILDDSDLFDTGLDFSGELPSLSPAPSLSVEDNIRRDSNPEIKTQNSGFKPHSVPQPPKTLAEKKCCMLVSHCLNSLSEFMENMSFIDALLTDPGEQNELGRSAFHWTNGRVKSGLCDEFSLENRDRWAPQSAGELKATAEALSFTECSSTISKALESLNSCKQLERDPTNELTVCVSQRRHDACFRQSAANLDNADKRMAVIKSVFSSRSFLTLGNKQASIIDYLPTLRNICRTEKLKEQEKNKRRFLHYFEGIHLEIPEETITTLAADFP.

Phosphoserine is present on serine 44. Lysine 127 participates in a covalent cross-link: Glycyl lysine isopeptide (Lys-Gly) (interchain with G-Cter in SUMO2). 7 disordered regions span residues 170-254 (SIED…KRAD), 282-311 (PAVPACVPSGPGEAVKSGSEGELSGSCEPS), 323-367 (AQVH…RKSN), 398-572 (QQFM…EPGS), 588-623 (RSCSTPATNALGGTESEDAQDTIPVKASTPKSARTS), 647-684 (KFTRISTPKKSKKSSKKSETTEEELTSQKKKANSTSKN), and 709-729 (VVPLRRSSRHQARSAKEKSPE). Phosphoserine is present on serine 215. A compositionally biased stretch (basic and acidic residues) spans 243-254 (NDSRTHATKRAD). Residues 298–311 (SGSEGELSGSCEPS) show a composition bias toward low complexity. A phosphoserine mark is found at serine 351 and serine 366. An interaction with WDR48 region spans residues 365-381 (KSNVVIQEGQLELAVLE). Residues 418 to 442 (KPLEKQKDPSEKSVHEGDSSSEKII) are compositionally biased toward basic and acidic residues. Over residues 445–456 (PNIQRVSSQGCL) the composition is skewed to polar residues. A compositionally biased stretch (basic and acidic residues) spans 459–468 (HADRGSFPKE). Basic residues predominate over residues 469–481 (KSKKPNKKGKKTR). Basic and acidic residues predominate over residues 487 to 505 (NREENIQKEKTAFSLKDEQ). Over residues 540–559 (DSVQMSLCNRNKSRSSSTPT) the composition is skewed to polar residues. Residues serine 591 and serine 603 each carry the phosphoserine modification. 2 positions are modified to phosphoserine: serine 727 and serine 801. The tract at residues 965–1034 (GKQASPQLQP…NLDPSRDSGT (70 aa)) is disordered. The segment covering 1006–1019 (EEMKGRSKDLDERI) has biased composition (basic and acidic residues). Residue serine 1104 is modified to Phosphoserine. Residue 1119-1126 (GPTGVGKT) coordinates ATP. The disordered stretch occupies residues 1183–1216 (YNIGKSPKKLNSPGKVVTSPRKLPPSSPKTSGQK). Positions 1415-1419 (LVCSE) match the LXCXE motif motif. Disordered regions lie at residues 1527–1552 (PASMGHLTRKQSKDQPLRKSQKRKQK) and 1592–1611 (SNPEIKTQNSGFKPHSVPQP). The segment at 1612–1701 (PKTLAEKKCC…ATAEALSFTE (90 aa)) is interaction with RAD51 and RFC5.

It belongs to the AAA ATPase family. In terms of assembly, component of a heteropentameric replication factor ATAD5 RFC-like complex composed of one large subunit (ATAD5) and four small subunits (RFC2, RFC3, RFC4 and RFC5). Within the ATAD5 RFC-like complex, interacts with RFC2, RFC4 and RFC5. Within the ATAD5 RFC-like complex, interacts directly via-N terminal with RAD51; the interactions is enhanced under replication stress. Interacts with RB1 predominantly in G1 phase via its LXCXE motif. Interacts with RAD9A in growing cells. The interaction with RAD9A is reduced after exposure to DNA replication-inhibiting agents. Interacts with BRD4. Interacts with PCNA. Interacts with deubiquitinating enzyme USP1, and its associated factor, WDR48. ATR may stimulate the RAD9A dissociation. Expressed ubiquitously in all cell lines like teratocarcinoma, cell lymphoma, lymphoma.

Its subcellular location is the nucleus. In terms of biological role, has an important role in DNA replication and in maintaining genome integrity during replication stress. Involved in a RAD9A-related damage checkpoint, a pathway that is important in determining whether DNA damage is compatible with cell survival or whether it requires cell elimination by apoptosis. Modulates the RAD9A interaction with BCL2 and thereby induces DNA damage-induced apoptosis. Promotes PCNA deubiquitination by recruiting the ubiquitin-specific protease 1 (USP1) and WDR48 thereby down-regulating the error-prone damage bypass pathway. As component of the ATAD5 RFC-like complex, regulates the function of the DNA polymerase processivity factor PCNA by unloading the ring-shaped PCNA homotrimer from DNA after replication during the S phase of the cell cycle. This seems to be dependent on its ATPase activity. Plays important roles in restarting stalled replication forks under replication stress, by unloading the PCNA homotrimer from DNA and recruiting RAD51 possibly through an ATR-dependent manner. Ultimately this enables replication fork regression, breakage, and eventual fork restart. Both the PCNA unloading activity and the interaction with WDR48 are required to efficiently recruit RAD51 to stalled replication forks. Promotes the generation of MUS81-mediated single-stranded DNA-associated breaks in response to replication stress, which is an alternative pathway to restart stalled/regressed replication forks. The polypeptide is ATPase family AAA domain-containing protein 5 (Atad5) (Mus musculus (Mouse)).